We begin with the raw amino-acid sequence, 67 residues long: Large ribosomal subunit protein bL35 (67 aa).

It belongs to the bacterial ribosomal protein bL35 family.

The sequence is that of Large ribosomal subunit protein bL35 from Zymomonas mobilis subsp. mobilis (strain ATCC 31821 / ZM4 / CP4).